Here is a 426-residue protein sequence, read N- to C-terminus: Glutamate-1-semialdehyde 2,1-aminomutase (426 aa).

Lys265 carries the N6-(pyridoxal phosphate)lysine modification.

The protein belongs to the class-III pyridoxal-phosphate-dependent aminotransferase family. HemL subfamily. As to quaternary structure, homodimer. Pyridoxal 5'-phosphate is required as a cofactor.

It is found in the cytoplasm. It catalyses the reaction (S)-4-amino-5-oxopentanoate = 5-aminolevulinate. Its pathway is porphyrin-containing compound metabolism; protoporphyrin-IX biosynthesis; 5-aminolevulinate from L-glutamyl-tRNA(Glu): step 2/2. The chain is Glutamate-1-semialdehyde 2,1-aminomutase from Hydrogenovibrio crunogenus (strain DSM 25203 / XCL-2) (Thiomicrospira crunogena).